The primary structure comprises 48 residues: Large ribosomal subunit protein eL40 (48 aa).

The protein belongs to the eukaryotic ribosomal protein eL40 family.

The polypeptide is Large ribosomal subunit protein eL40 (Methanosphaerula palustris (strain ATCC BAA-1556 / DSM 19958 / E1-9c)).